We begin with the raw amino-acid sequence, 227 residues long: Urease accessory protein UreF (227 aa).

The protein belongs to the UreF family. As to quaternary structure, ureD, UreF and UreG form a complex that acts as a GTP-hydrolysis-dependent molecular chaperone, activating the urease apoprotein by helping to assemble the nickel containing metallocenter of UreC. The UreE protein probably delivers the nickel.

It is found in the cytoplasm. Required for maturation of urease via the functional incorporation of the urease nickel metallocenter. The protein is Urease accessory protein UreF of Actinobacillus pleuropneumoniae serotype 5b (strain L20).